A 246-amino-acid polypeptide reads, in one-letter code: Acetoacetyl-CoA reductase (246 aa).

NADP(+)-binding positions include 12-14 (GGI) and 88-92 (CAGIT). Substrate is bound by residues D94 and 147–150 (QFGQ). Residue Y153 is the Proton acceptor of the active site. 183-186 (PGYV) contributes to the NADP(+) binding site. 184-185 (GY) serves as a coordination point for substrate.

The protein belongs to the short-chain dehydrogenases/reductases (SDR) family.

It is found in the cytoplasm. The catalysed reaction is a (3R)-3-hydroxyacyl-CoA + NADP(+) = a 3-oxoacyl-CoA + NADPH + H(+). Its pathway is biopolymer metabolism; poly-(R)-3-hydroxybutanoate biosynthesis. This chain is Acetoacetyl-CoA reductase, found in Allochromatium vinosum (strain ATCC 17899 / DSM 180 / NBRC 103801 / NCIMB 10441 / D) (Chromatium vinosum).